Reading from the N-terminus, the 229-residue chain is Large ribosomal subunit protein bL25 (229 aa).

Disordered regions lie at residues 1-21 and 187-229; these read MSDA…GASR and PSAL…KGDD. Over residues 196–207 the composition is skewed to acidic residues; the sequence is SEEEEDGEEVDA.

It belongs to the bacterial ribosomal protein bL25 family. CTC subfamily. In terms of assembly, part of the 50S ribosomal subunit; part of the 5S rRNA/L5/L18/L25 subcomplex. Contacts the 5S rRNA. Binds to the 5S rRNA independently of L5 and L18.

Its function is as follows. This is one of the proteins that binds to the 5S RNA in the ribosome where it forms part of the central protuberance. This chain is Large ribosomal subunit protein bL25, found in Erythrobacter litoralis (strain HTCC2594).